The chain runs to 295 residues: Nucleotide-binding protein LSEI_0959 (295 aa).

12 to 19 serves as a coordination point for ATP; that stretch reads GMSGAGKT. 62 to 65 contacts GTP; it reads DLRS.

It belongs to the RapZ-like family.

Its function is as follows. Displays ATPase and GTPase activities. The sequence is that of Nucleotide-binding protein LSEI_0959 from Lacticaseibacillus paracasei (strain ATCC 334 / BCRC 17002 / CCUG 31169 / CIP 107868 / KCTC 3260 / NRRL B-441) (Lactobacillus paracasei).